Reading from the N-terminus, the 356-residue chain is tRNA N6-adenosine threonylcarbamoyltransferase (356 aa).

The Fe cation site is built by His-114 and His-118. Residues 136-140, Asp-169, Gly-182, and Asn-280 contribute to the substrate site; that span reads LVSGG. Residue Asp-308 participates in Fe cation binding. Residues 333 to 356 form a disordered region; sequence ARPRWPLDNSQPALLGSGKKGAKA.

This sequence belongs to the KAE1 / TsaD family. The cofactor is Fe(2+).

The protein localises to the cytoplasm. The enzyme catalyses L-threonylcarbamoyladenylate + adenosine(37) in tRNA = N(6)-L-threonylcarbamoyladenosine(37) in tRNA + AMP + H(+). Functionally, required for the formation of a threonylcarbamoyl group on adenosine at position 37 (t(6)A37) in tRNAs that read codons beginning with adenine. Is involved in the transfer of the threonylcarbamoyl moiety of threonylcarbamoyl-AMP (TC-AMP) to the N6 group of A37, together with TsaE and TsaB. TsaD likely plays a direct catalytic role in this reaction. This is tRNA N6-adenosine threonylcarbamoyltransferase from Dinoroseobacter shibae (strain DSM 16493 / NCIMB 14021 / DFL 12).